Reading from the N-terminus, the 373-residue chain is GPN-loop GTPase 1 (373 aa).

N-acetylalanine is present on Ala-2. 29-34 provides a ligand contact to GTP; that stretch reads GSGKTT. Positions 86 to 88 match the Gly-Pro-Asn (GPN)-loop; involved in dimer interface motif; that stretch reads GPN. Position 189 to 192 (189 to 192) interacts with GTP; that stretch reads NKTD. Phosphoserine is present on residues Ser-301, Ser-312, and Ser-314. The interval 304-373 is disordered; that stretch reads LDTGTATGSS…SMAQYWKKNK (70 aa). The residue at position 328 (Thr-328) is a Phosphothreonine. The segment covering 330-342 has biased composition (acidic residues); it reads DEEDEEADSDTDD. Ser-338 bears the Phosphoserine mark. Thr-340 carries the phosphothreonine modification. Basic and acidic residues predominate over residues 343–355; the sequence is IDHRVTEESREEP.

The protein belongs to the GPN-loop GTPase family. As to quaternary structure, heterodimer with GPN3. Binds to RNA polymerase II (RNAPII). Interacts directly with RNAPII subunits RPB4 and RPB7 and the CTD of RPB1. Interacts with XPA.

It is found in the cytoplasm. The protein resides in the nucleus. Its function is as follows. Small GTPase required for proper nuclear import of RNA polymerase II (RNAPII). May act at an RNAP assembly step prior to nuclear import. Forms an interface between the RNA polymerase II enzyme and chaperone/scaffolding proteins, suggesting that it is required to connect RNA polymerase II to regulators of protein complex formation. May be involved in nuclear localization of XPA. In Bos taurus (Bovine), this protein is GPN-loop GTPase 1.